Here is a 704-residue protein sequence, read N- to C-terminus: UvrABC system protein B (704 aa).

A Helicase ATP-binding domain is found at Glu35–Met188. Position 48 to 55 (Gly48 to Ser55) interacts with ATP. The Beta-hairpin signature appears at Tyr101 to Ile124. The Helicase C-terminal domain maps to Gln438–Thr604. Positions Val659–Glu694 constitute a UVR domain.

This sequence belongs to the UvrB family. Forms a heterotetramer with UvrA during the search for lesions. Interacts with UvrC in an incision complex.

The protein localises to the cytoplasm. The UvrABC repair system catalyzes the recognition and processing of DNA lesions. A damage recognition complex composed of 2 UvrA and 2 UvrB subunits scans DNA for abnormalities. Upon binding of the UvrA(2)B(2) complex to a putative damaged site, the DNA wraps around one UvrB monomer. DNA wrap is dependent on ATP binding by UvrB and probably causes local melting of the DNA helix, facilitating insertion of UvrB beta-hairpin between the DNA strands. Then UvrB probes one DNA strand for the presence of a lesion. If a lesion is found the UvrA subunits dissociate and the UvrB-DNA preincision complex is formed. This complex is subsequently bound by UvrC and the second UvrB is released. If no lesion is found, the DNA wraps around the other UvrB subunit that will check the other stand for damage. This Pseudarthrobacter chlorophenolicus (strain ATCC 700700 / DSM 12829 / CIP 107037 / JCM 12360 / KCTC 9906 / NCIMB 13794 / A6) (Arthrobacter chlorophenolicus) protein is UvrABC system protein B.